We begin with the raw amino-acid sequence, 430 residues long: UDP-N-acetylmuramoylalanine--D-glutamate ligase (430 aa).

109–115 (GTDGKST) is a binding site for ATP.

The protein belongs to the MurCDEF family.

The protein resides in the cytoplasm. The enzyme catalyses UDP-N-acetyl-alpha-D-muramoyl-L-alanine + D-glutamate + ATP = UDP-N-acetyl-alpha-D-muramoyl-L-alanyl-D-glutamate + ADP + phosphate + H(+). It participates in cell wall biogenesis; peptidoglycan biosynthesis. Cell wall formation. Catalyzes the addition of glutamate to the nucleotide precursor UDP-N-acetylmuramoyl-L-alanine (UMA). This chain is UDP-N-acetylmuramoylalanine--D-glutamate ligase, found in Thermotoga sp. (strain RQ2).